A 482-amino-acid chain; its full sequence is FAD-linked oxidoreductase alt4 (482 aa).

Positions 53–211 (ERPTYLAIVD…LEATFQVYPQ (159 aa)) constitute an FAD-binding PCMH-type domain.

Belongs to the oxygen-dependent FAD-linked oxidoreductase family. The cofactor is FAD.

It functions in the pathway secondary metabolite biosynthesis. Its function is as follows. FAD-linked oxidoreductase; part of the gene cluster that mediates the biosynthesis of alternapyrone derivatives. Alternapyrone is a decaketide with octa-methylation from methionine on every C2 unit except the third unit. All the domains in the polyketide synthase alt5 are apparently involved in alternapyrone synthesis, that is, the 8 CMeT, 7 KR, 7 DH, and 4 ER reactions in the 9 KS-mediated condensation steps required for alternapyrone synthesis. the alternapyrone produced by alt5 might be intensively modified by cytochrome P450 monooxygenases alt1, alt2 and alt3 and FAD-dependent oxidoreductase alt4 present in the alt gene cluster. The protein is FAD-linked oxidoreductase alt4 of Alternaria solani.